The following is a 627-amino-acid chain: UvrABC system protein C (627 aa).

Residues 26-105 form the GIY-YIG domain; it reads PSPGVYQFRN…IKELKPRYNV (80 aa). Positions 219–254 constitute a UVR domain; the sequence is STMIRSLTSAMQLFARELKFERAAEIKMQLESLKRY.

It belongs to the UvrC family. In terms of assembly, interacts with UvrB in an incision complex.

Its subcellular location is the cytoplasm. In terms of biological role, the UvrABC repair system catalyzes the recognition and processing of DNA lesions. UvrC both incises the 5' and 3' sides of the lesion. The N-terminal half is responsible for the 3' incision and the C-terminal half is responsible for the 5' incision. This is UvrABC system protein C from Pelodictyon phaeoclathratiforme (strain DSM 5477 / BU-1).